A 593-amino-acid polypeptide reads, in one-letter code: Multidrug resistance-like ATP-binding protein MdlB (593 aa).

The Cytoplasmic segment spans residues 1-25; the sequence is MRSFSQLWPTLKRLLAYGSPWRKPL. The region spanning 25 to 310 is the ABC transmembrane type-1 domain; that stretch reads LGIAVLMMWV…LTTQQAMLQQ (286 aa). The chain crosses the membrane as a helical span at residues 26 to 46; that stretch reads GIAVLMMWVAAAAEVSGPLLI. Topologically, residues 47–62 are periplasmic; it reads SYFIDNMVAKNNLPLK. The helical transmembrane segment at 63 to 83 threads the bilayer; the sequence is VVAGLAAAYVGLQLFAAGLHY. The Cytoplasmic segment spans residues 84–140; sequence AQSLLFNRAAVGVVQQLRTDVMDAALRQPLSEFDTQPVGQVISRVTNDTEVIRDLYV. A helical membrane pass occupies residues 141–161; the sequence is TVVATVLRSAALVGAMLVAMF. Residues 162 to 164 are Periplasmic-facing; the sequence is SLD. Residues 165 to 185 form a helical membrane-spanning segment; the sequence is WRMALVAIMIFPVVLVVMVIY. The Cytoplasmic segment spans residues 186 to 254; that stretch reads QRYSTPIVRR…LRLDGFLLRP (69 aa). Residues 255 to 275 traverse the membrane as a helical segment; the sequence is LLSLFSSLILCGLLMLFGFSA. The Periplasmic portion of the chain corresponds to 276–278; the sequence is SGT. Residues 279–299 form a helical membrane-spanning segment; that stretch reads IEVGVLYAFISYLGRLNEPLI. Over 300-593 the chain is Cytoplasmic; the sequence is ELTTQQAMLQ…SVREEESLSA (294 aa). In terms of domain architecture, ABC transporter spans 341 to 574; the sequence is IEVDNVSFAY…QGRYWQMYQL (234 aa). An ATP-binding site is contributed by 374–381; the sequence is GHTGSGKS.

This sequence belongs to the ABC transporter superfamily. Drug exporter-2 (TC 3.A.1.117) family.

Its subcellular location is the cell inner membrane. It carries out the reaction ATP + H2O + xenobioticSide 1 = ADP + phosphate + xenobioticSide 2.. This chain is Multidrug resistance-like ATP-binding protein MdlB (mdlB), found in Escherichia coli O6:H1 (strain CFT073 / ATCC 700928 / UPEC).